The primary structure comprises 225 residues: Ribonuclease 3 (225 aa).

An RNase III domain is found at isoleucine 5–aspartate 127. Glutamate 40 contacts Mg(2+). Aspartate 44 is a catalytic residue. Aspartate 113 and glutamate 116 together coordinate Mg(2+). Glutamate 116 is an active-site residue. Residues aspartate 154–asparagine 224 enclose the DRBM domain.

It belongs to the ribonuclease III family. Homodimer. Requires Mg(2+) as cofactor.

It localises to the cytoplasm. The enzyme catalyses Endonucleolytic cleavage to 5'-phosphomonoester.. Digests double-stranded RNA. Involved in the processing of primary rRNA transcript to yield the immediate precursors to the large and small rRNAs (23S and 16S). Processes some mRNAs, and tRNAs when they are encoded in the rRNA operon. Processes pre-crRNA and tracrRNA of type II CRISPR loci if present in the organism. The polypeptide is Ribonuclease 3 (Vibrio vulnificus (strain YJ016)).